Consider the following 229-residue polypeptide: Cytidylate kinase (229 aa).

ATP is bound at residue 10-18 (GFSSCGKST).

Belongs to the cytidylate kinase family. Type 1 subfamily.

It is found in the cytoplasm. It catalyses the reaction CMP + ATP = CDP + ADP. The enzyme catalyses dCMP + ATP = dCDP + ADP. The protein is Cytidylate kinase of Bacteroides fragilis (strain ATCC 25285 / DSM 2151 / CCUG 4856 / JCM 11019 / LMG 10263 / NCTC 9343 / Onslow / VPI 2553 / EN-2).